Here is an 83-residue protein sequence, read N- to C-terminus: MSKGHSLQDPYLNALRKERIPVSIFLVNGIKLQGQIESFDQFVILLKNTVSQMVYKHAISTVVPARNVRLPQQNPAGEGESED.

In terms of domain architecture, Sm spans 9–68; the sequence is DPYLNALRKERIPVSIFLVNGIKLQGQIESFDQFVILLKNTVSQMVYKHAISTVVPARNV.

It belongs to the Hfq family. In terms of assembly, homohexamer.

Functionally, RNA chaperone that binds small regulatory RNA (sRNAs) and mRNAs to facilitate mRNA translational regulation in response to envelope stress, environmental stress and changes in metabolite concentrations. Also binds with high specificity to tRNAs. This chain is RNA-binding protein Hfq, found in Marinobacter nauticus (strain ATCC 700491 / DSM 11845 / VT8) (Marinobacter aquaeolei).